Consider the following 66-residue polypeptide: MAKGKDVRVTVILECTNCVRTGLNKESRGVSRYITQKNRHNTPSRLELRKFCPYCYKHTIHGEIKK.

Belongs to the bacterial ribosomal protein bL33 family.

It is found in the plastid. The protein resides in the chloroplast. The polypeptide is Large ribosomal subunit protein bL33c (Eucalyptus globulus subsp. globulus (Tasmanian blue gum)).